A 365-amino-acid chain; its full sequence is Succinyl-diaminopimelate desuccinylase (365 aa).

H64 is a Zn(2+) binding site. D66 is a catalytic residue. D95 contributes to the Zn(2+) binding site. E125 acts as the Proton acceptor in catalysis. Positions 126, 154, and 339 each coordinate Zn(2+).

The protein belongs to the peptidase M20A family. DapE subfamily. As to quaternary structure, homodimer. Zn(2+) serves as cofactor. The cofactor is Co(2+).

The enzyme catalyses N-succinyl-(2S,6S)-2,6-diaminopimelate + H2O = (2S,6S)-2,6-diaminopimelate + succinate. Its pathway is amino-acid biosynthesis; L-lysine biosynthesis via DAP pathway; LL-2,6-diaminopimelate from (S)-tetrahydrodipicolinate (succinylase route): step 3/3. Functionally, catalyzes the hydrolysis of N-succinyl-L,L-diaminopimelic acid (SDAP), forming succinate and LL-2,6-diaminopimelate (DAP), an intermediate involved in the bacterial biosynthesis of lysine and meso-diaminopimelic acid, an essential component of bacterial cell walls. This is Succinyl-diaminopimelate desuccinylase from Nautilia profundicola (strain ATCC BAA-1463 / DSM 18972 / AmH).